The chain runs to 365 residues: Metallophosphoesterase 1 homolog (365 aa).

The helical transmembrane segment at 10–30 (PILLAIILVVYNEYFIFFIAF) threads the bilayer. A divalent metal cation-binding residues include D54, D96, N132, H208, H262, and H264. Residues 319–339 (ILQIMVYIFGGIGIVILAFIL) traverse the membrane as a helical segment.

This sequence belongs to the metallophosphoesterase superfamily. MPPE1 family. Mn(2+) is required as a cofactor.

Its subcellular location is the endoplasmic reticulum-Golgi intermediate compartment membrane. The protein localises to the golgi apparatus. It is found in the cis-Golgi network membrane. Its function is as follows. Metallophosphoesterase required for transport of GPI-anchor proteins from the endoplasmic reticulum to the Golgi. Acts in lipid remodeling steps of GPI-anchor maturation by mediating the removal of a side-chain ethanolamine-phosphate (EtNP) from the second Man (Man2) of the GPI intermediate, an essential step for efficient transport of GPI-anchor proteins. The polypeptide is Metallophosphoesterase 1 homolog (Caenorhabditis elegans).